The primary structure comprises 201 residues: Superoxide dismutase [Fe] (201 aa).

Residues His-27, His-79, Asp-161, and His-165 each contribute to the Fe cation site.

The protein belongs to the iron/manganese superoxide dismutase family. Homodimer. Fe cation is required as a cofactor.

The enzyme catalyses 2 superoxide + 2 H(+) = H2O2 + O2. In terms of biological role, destroys superoxide anion radicals which are normally produced within the cells and which are toxic to biological systems. The sequence is that of Superoxide dismutase [Fe] (sodB) from Synechococcus elongatus (strain ATCC 33912 / PCC 7942 / FACHB-805) (Anacystis nidulans R2).